Consider the following 253-residue polypeptide: 3-dehydroquinate dehydratase (253 aa).

3-dehydroquinate is bound by residues 46–48 (EWR) and arginine 82. Histidine 143 functions as the Proton donor/acceptor in the catalytic mechanism. The active-site Schiff-base intermediate with substrate is the lysine 170. 3-dehydroquinate-binding residues include arginine 213, serine 232, and glutamine 236.

This sequence belongs to the type-I 3-dehydroquinase family. As to quaternary structure, homodimer.

It catalyses the reaction 3-dehydroquinate = 3-dehydroshikimate + H2O. It functions in the pathway metabolic intermediate biosynthesis; chorismate biosynthesis; chorismate from D-erythrose 4-phosphate and phosphoenolpyruvate: step 3/7. Functionally, involved in the third step of the chorismate pathway, which leads to the biosynthesis of aromatic amino acids. Catalyzes the cis-dehydration of 3-dehydroquinate (DHQ) and introduces the first double bond of the aromatic ring to yield 3-dehydroshikimate. The protein is 3-dehydroquinate dehydratase of Bacillus velezensis (strain DSM 23117 / BGSC 10A6 / LMG 26770 / FZB42) (Bacillus amyloliquefaciens subsp. plantarum).